A 279-amino-acid polypeptide reads, in one-letter code: Movement protein (279 aa).

The segment at 247 to 279 (ESEELNVESPPAAIGSSSASRSEAFRPQVVNGL) is disordered. Positions 254 to 268 (ESPPAAIGSSSASRS) are enriched in low complexity.

The protein belongs to the cucumovirus movement protein family.

It is found in the host cell junction. The protein resides in the host plasmodesma. Transports viral genome to neighboring plant cells directly through plasmosdesmata, without any budding. The movement protein allows efficient cell to cell propagation, by bypassing the host cell wall barrier. Acts by forming a tubular structure at the host plasmodesmata, enlarging it enough to allow free passage of virion capsids. The chain is Movement protein from Cucumis sativus (Cucumber).